Consider the following 644-residue polypeptide: 1-deoxy-D-xylulose-5-phosphate synthase (644 aa).

Thiamine diphosphate is bound by residues histidine 78 and 120–122; that span reads GHA. Aspartate 149 lines the Mg(2+) pocket. Thiamine diphosphate-binding positions include 150–151, asparagine 178, and glutamate 373; that span reads AA. Residue asparagine 178 coordinates Mg(2+).

Belongs to the transketolase family. DXPS subfamily. In terms of assembly, homodimer. Requires Mg(2+) as cofactor. Thiamine diphosphate serves as cofactor.

It carries out the reaction D-glyceraldehyde 3-phosphate + pyruvate + H(+) = 1-deoxy-D-xylulose 5-phosphate + CO2. Its pathway is metabolic intermediate biosynthesis; 1-deoxy-D-xylulose 5-phosphate biosynthesis; 1-deoxy-D-xylulose 5-phosphate from D-glyceraldehyde 3-phosphate and pyruvate: step 1/1. Functionally, catalyzes the acyloin condensation reaction between C atoms 2 and 3 of pyruvate and glyceraldehyde 3-phosphate to yield 1-deoxy-D-xylulose-5-phosphate (DXP). In Chlamydia caviae (strain ATCC VR-813 / DSM 19441 / 03DC25 / GPIC) (Chlamydophila caviae), this protein is 1-deoxy-D-xylulose-5-phosphate synthase.